Reading from the N-terminus, the 52-residue chain is Large ribosomal subunit protein eL39 (52 aa).

Belongs to the eukaryotic ribosomal protein eL39 family.

The chain is Large ribosomal subunit protein eL39 (RPL39) from Tetrahymena thermophila (strain SB210).